We begin with the raw amino-acid sequence, 155 residues long: Vasotocin-neurophysin VT 1 (155 aa).

Positions 1 to 20 (MPDSTIPLLCVLGLLALSSA) are cleaved as a signal peptide. Cysteine 21 and cysteine 26 are oxidised to a cystine. Glycine 29 is modified (glycine amide). 7 disulfide bridges follow: cysteine 41–cysteine 85, cysteine 44–cysteine 58, cysteine 52–cysteine 75, cysteine 59–cysteine 65, cysteine 92–cysteine 105, cysteine 99–cysteine 117, and cysteine 106–cysteine 111.

Belongs to the vasopressin/oxytocin family. Seven disulfide bonds are present in neurophysin.

Its subcellular location is the secreted. Its function is as follows. Vasotocin is probably an antidiuretic hormone. This chain is Vasotocin-neurophysin VT 1, found in Oncorhynchus masou (Cherry salmon).